The sequence spans 160 residues: Major pollen allergen Car b 1 isoforms 1A and 1B (160 aa).

It belongs to the BetVI family.

The protein is Major pollen allergen Car b 1 isoforms 1A and 1B of Carpinus betulus (European hornbeam).